The sequence spans 492 residues: Catalase isozyme 1 (492 aa).

Active-site residues include H65 and N138. Heme is bound at residue Y348.

The protein belongs to the catalase family. As to quaternary structure, homotetramer. Heme serves as cofactor.

Its subcellular location is the peroxisome. The enzyme catalyses 2 H2O2 = O2 + 2 H2O. Functionally, occurs in almost all aerobically respiring organisms and serves to protect cells from the toxic effects of hydrogen peroxide. This chain is Catalase isozyme 1 (CAT1), found in Solanum lycopersicum (Tomato).